Here is a 339-residue protein sequence, read N- to C-terminus: DNA-directed RNA polymerase subunit alpha (339 aa).

An alpha N-terminal domain (alpha-NTD) region spans residues 1–235 (MVIQKNWQEL…DQLQVFVNFE (235 aa)). Residues 251–339 (FNPALLKKVD…DLAKRFEEHY (89 aa)) are alpha C-terminal domain (alpha-CTD).

Belongs to the RNA polymerase alpha chain family. Homodimer. The RNAP catalytic core consists of 2 alpha, 1 beta, 1 beta' and 1 omega subunit. When a sigma factor is associated with the core the holoenzyme is formed, which can initiate transcription.

It catalyses the reaction RNA(n) + a ribonucleoside 5'-triphosphate = RNA(n+1) + diphosphate. Its function is as follows. DNA-dependent RNA polymerase catalyzes the transcription of DNA into RNA using the four ribonucleoside triphosphates as substrates. This chain is DNA-directed RNA polymerase subunit alpha, found in Methylobacterium radiotolerans (strain ATCC 27329 / DSM 1819 / JCM 2831 / NBRC 15690 / NCIMB 10815 / 0-1).